A 323-amino-acid chain; its full sequence is MSNIQNHQKVVLVGDGAVGSSYAFAMAEEGIAEEFVIVDVVKVRTVGDALDLEDATPFTAPKNIYSGEYSDCKDADLVVITAGAPQKPGETRLDLVNKNLNILSTILKPVVDSGFDGIFLVAANPVDILTYATWKFSGFPKEKVIGSGISLDTARLRVALGKKFNVSPESVDAYILGEHGDSEFAAYSSATIGTKPLLEIAKEEGVSTDELAEIEDSVRNKAYEIINKKGATFYGVGTALMRISKAILRDENAVLPVGAYMDGEYGLNDIYIGTPAVINGQGLNRVIEAPLSDDEKKKMTDSATTLKKVLTDGLNALAEKQDK.

Residues Val18, Asp39, Arg44, Tyr69, and 83 to 84 contribute to the NAD(+) site; that span reads GA. Residues Gln86 and Arg92 each contribute to the substrate site. NAD(+) is bound by residues Thr105, 122 to 124, and Ser147; that span reads AAN. Position 124–127 (124–127) interacts with substrate; that stretch reads NPVD. Position 152-155 (152-155) interacts with substrate; sequence DTAR. The Proton acceptor role is filled by His179. Phosphotyrosine is present on Tyr223. Thr232 serves as a coordination point for substrate.

It belongs to the LDH/MDH superfamily. LDH family. Homotetramer.

It localises to the cytoplasm. The enzyme catalyses (S)-lactate + NAD(+) = pyruvate + NADH + H(+). Its pathway is fermentation; pyruvate fermentation to lactate; (S)-lactate from pyruvate: step 1/1. Its function is as follows. Catalyzes the conversion of lactate to pyruvate. This Pediococcus acidilactici protein is L-lactate dehydrogenase.